The chain runs to 305 residues: T-cell immunoglobulin and mucin domain-containing protein 2 (305 aa).

The first 21 residues, 1-21 (MNQIQVFISGLILLLPGAVES), serve as a signal peptide directing secretion. The region spanning 22-125 (HTAVQGLAGH…AFHFVDYMLE (104 aa)) is the Ig-like V-type domain. At 22–231 (HTAVQGLAGH…QKPQKNLNKG (210 aa)) the chain is on the extracellular side. Intrachain disulfides connect Cys37–Cys109, Cys50–Cys61, and Cys56–Cys108. Asn86 and Asn91 each carry an N-linked (GlcNAc...) asparagine glycan. The disordered stretch occupies residues 130-174 (ISTSPPTRPTATGRPTTISTRSTHVPTSTRVSTSTSPTPAHTETY). Over residues 131–167 (STSPPTRPTATGRPTTISTRSTHVPTSTRVSTSTSPT) the composition is skewed to low complexity. A helical transmembrane segment spans residues 232-252 (FYVGISIAALLILMLLSTMVI). Topologically, residues 253 to 305 (TRYVVMKRKSESLSFVAFPISKIGASPKKVVERTRCEDQVYIIEDTPYPEEES) are cytoplasmic.

It belongs to the immunoglobulin superfamily. TIM family. In terms of assembly, homodimer. In terms of tissue distribution, expressed on late differentiated Th2 cells. Expressed also on all splenic B-cells, with increased levels on germinal center B-cells, in the liver, especially in bile duct epithelial cells, and in renal tubule cells. Within retina, mainly expressed in Mueller cells.

Its subcellular location is the cell membrane. Functionally, cell surface glycoprotein that participates in iron homeostasis in the liver, the kidney, the retina and oligodendrocytes by acting as a receptor of H-ferritin. Mechanistically, mediates iron-containing ferritin uptake via an endocytic pathway, trafficking to endosomes and subsequently to lysosomes. Plays also an important role in the regulation of Th2 immunity. Receptor for SEMA4A involved in the regulation of T-cell function, enhancing T-cell activation. This is T-cell immunoglobulin and mucin domain-containing protein 2 (Timd2) from Mus musculus (Mouse).